The sequence spans 197 residues: uncharacterized protein (197 aa).

4 helical membrane passes run 11–31 (IALI…ISAS), 85–105 (STFM…SIFV), 109–129 (AVVV…VVLF), and 174–194 (VGTG…YPFI).

The protein localises to the cell membrane. This is an uncharacterized protein from Methanocaldococcus jannaschii (strain ATCC 43067 / DSM 2661 / JAL-1 / JCM 10045 / NBRC 100440) (Methanococcus jannaschii).